The chain runs to 1390 residues: DNA-directed RNA polymerase subunit beta (1390 aa).

The disordered stretch occupies residues 556 to 576; sequence KLADQDAENDPDSDLGTKSSN.

Belongs to the RNA polymerase beta chain family. As to quaternary structure, the RNAP catalytic core consists of 2 alpha, 1 beta, 1 beta' and 1 omega subunit. When a sigma factor is associated with the core the holoenzyme is formed, which can initiate transcription.

The enzyme catalyses RNA(n) + a ribonucleoside 5'-triphosphate = RNA(n+1) + diphosphate. In terms of biological role, DNA-dependent RNA polymerase catalyzes the transcription of DNA into RNA using the four ribonucleoside triphosphates as substrates. This chain is DNA-directed RNA polymerase subunit beta, found in Mycoplasmoides gallisepticum (strain R(low / passage 15 / clone 2)) (Mycoplasma gallisepticum).